The following is an 868-amino-acid chain: DNA mismatch repair protein MutS (868 aa).

621 to 628 (GPNMGGKS) is a binding site for ATP. Residues 803-852 (LESGDGGDTGSAQLPLFGPEPVFPPPAQPEPEPDPIREAVENLDPDGLTP) are disordered. The segment covering 823–832 (PVFPPPAQPE) has biased composition (pro residues).

It belongs to the DNA mismatch repair MutS family.

This protein is involved in the repair of mismatches in DNA. It is possible that it carries out the mismatch recognition step. This protein has a weak ATPase activity. The sequence is that of DNA mismatch repair protein MutS from Halorhodospira halophila (strain DSM 244 / SL1) (Ectothiorhodospira halophila (strain DSM 244 / SL1)).